The following is a 187-amino-acid chain: UPF0301 protein VF_0434 (187 aa).

Belongs to the UPF0301 (AlgH) family.

This is UPF0301 protein VF_0434 from Aliivibrio fischeri (strain ATCC 700601 / ES114) (Vibrio fischeri).